The primary structure comprises 358 residues: Peptide chain release factor 1 (358 aa).

Gln233 is modified (N5-methylglutamine).

It belongs to the prokaryotic/mitochondrial release factor family. Post-translationally, methylated by PrmC. Methylation increases the termination efficiency of RF1.

It is found in the cytoplasm. Functionally, peptide chain release factor 1 directs the termination of translation in response to the peptide chain termination codons UAG and UAA. In Macrococcus caseolyticus (strain JCSC5402) (Macrococcoides caseolyticum), this protein is Peptide chain release factor 1.